The following is a 507-amino-acid chain: Glycogen synthase (507 aa).

Lys15 contributes to the ADP-alpha-D-glucose binding site.

This sequence belongs to the glycosyltransferase 1 family. Bacterial/plant glycogen synthase subfamily.

The enzyme catalyses [(1-&gt;4)-alpha-D-glucosyl](n) + ADP-alpha-D-glucose = [(1-&gt;4)-alpha-D-glucosyl](n+1) + ADP + H(+). Its pathway is glycan biosynthesis; glycogen biosynthesis. In terms of biological role, synthesizes alpha-1,4-glucan chains using ADP-glucose. This Rhodopirellula baltica (strain DSM 10527 / NCIMB 13988 / SH1) protein is Glycogen synthase.